Reading from the N-terminus, the 378-residue chain is Uroporphyrinogen decarboxylase (378 aa).

Substrate is bound by residues 40 to 44 (RQAGR), aspartate 90, tyrosine 167, serine 222, and histidine 355.

This sequence belongs to the uroporphyrinogen decarboxylase family. In terms of assembly, homodimer.

It localises to the cytoplasm. It catalyses the reaction uroporphyrinogen III + 4 H(+) = coproporphyrinogen III + 4 CO2. It functions in the pathway porphyrin-containing compound metabolism; protoporphyrin-IX biosynthesis; coproporphyrinogen-III from 5-aminolevulinate: step 4/4. In terms of biological role, catalyzes the decarboxylation of four acetate groups of uroporphyrinogen-III to yield coproporphyrinogen-III. This is Uroporphyrinogen decarboxylase from Psychrobacter arcticus (strain DSM 17307 / VKM B-2377 / 273-4).